The sequence spans 782 residues: General transcription and DNA repair factor IIH helicase/translocase subunit XPB (782 aa).

Over residues 1 to 11 (MGKRDRADREK) the composition is skewed to basic and acidic residues. The segment at 1-51 (MGKRDRADREKKKSKKRHYEDEEDEEDDAPGNDTQEAVPSAAGKQVDESGT) is disordered. The Nuclear localization signal motif lies at 6-18 (RADREKKKSKKRH). Residues 21 to 30 (DEEDEEDDAP) show a composition bias toward acidic residues. A Helicase ATP-binding domain is found at 327-488 (MFGNGRARSG…DLNFLIGPKL (162 aa)). 340–347 (LPCGAGKS) lines the ATP pocket. A DEVH box motif is present at residues 441 to 444 (DEVH). Residues 542-702 (RACQFLIKFH…LAGMEEEDLA (161 aa)) form the Helicase C-terminal domain. Ser686 carries the post-translational modification Phosphoserine. A Phosphoserine; by CK2 modification is found at Ser751.

The protein belongs to the helicase family. RAD25/XPB subfamily. As to quaternary structure, component of the 7-subunit TFIIH core complex composed of XPB/ERCC3, XPD/ERCC2, GTF2H1, GTF2H2, GTF2H3, GTF2H4 and GTF2H5, which is active in NER. The core complex associates with the 3-subunit CDK-activating kinase (CAK) module composed of CCNH/cyclin H, CDK7 and MNAT1 to form the 10-subunit holoenzyme (holo-TFIIH) active in transcription. Interacts with PUF60. Interacts with ATF7IP. Interacts with KAT2A; leading to KAT2A recruitment to promoters and acetylation of histones. Part of TBP-based Pol II pre-initiation complex (PIC), in which Pol II core assembles with general transcription factors and other specific initiation factors including GTF2E1, GTF2E2, GTF2F1, GTF2F2, TCEA1, ERCC2, ERCC3, GTF2H2, GTF2H3, GTF2H4, GTF2H5, GTF2A1, GTF2A2, GTF2B and TBP; this large multi-subunit PIC complex mediates DNA unwinding and targets Pol II core to the transcription start site where the first phosphodiester bond forms. Phosphorylation on Ser-751 by CK2 controls the 5'-excision activity of ERCC1-XPF endonuclease; phosphorylated protein inhibits the excision activity and thus NER. Dephosphorylation reactivates the 5'-excision step. Phosphorylation has no effect on transcription or the 3'-5' helicase activity.

Its subcellular location is the nucleus. The enzyme catalyses Couples ATP hydrolysis with the unwinding of duplex DNA by translocating in the 3'-5' direction.. The catalysed reaction is ATP + H2O = ADP + phosphate + H(+). Its activity is regulated as follows. Phosphorylation on Ser-751 by CK2 controls the 5'-excision activity of ERCC1-XPF endonuclease; phosphorylated protein inhibits the excision activity and thus NER. ATPase activity is stimulated by TFIIH subunit p52 (GTF2H4). DNA translocase activity by this subunit in TFIIH is stimulated by XPA, ERCC5/XPG and XFP plus ERCC1. ATP-dependent 3'-5' DNA helicase/translocase; binds dsDNA rather than ssDNA, unzipping it in a translocase rather than classical helicase activity. Component of the general transcription and DNA repair factor IIH (TFIIH) core complex. When complexed to CDK-activating kinase (CAK), involved in RNA transcription by RNA polymerase II. The ATPase activity of XPB/ERCC3, but not its helicase activity, is required for DNA opening; it may wrap around the damaged DNA wedging it open, causing localized melting and twisting that allows XPD/ERCC2 helicase to anchor. The ATP-dependent helicase activity of XPB/ERCC3 may be required for promoter escape. Also involved in transcription-coupled nucleotide excision repair (NER) of damaged DNA. In NER, TFIIH acts by opening DNA around the lesion to allow the excision of the damaged oligonucleotide and its replacement by a new DNA fragment. The structure of the TFIIH transcription complex differs from the NER-TFIIH complex; large movements by XPD/ERCC2 and XPB/ERCC3 are stabilized by XPA. In Bos taurus (Bovine), this protein is General transcription and DNA repair factor IIH helicase/translocase subunit XPB (ERCC3).